The sequence spans 230 residues: Methyltransferase aurB (230 aa).

This sequence belongs to the methyltransferase superfamily.

It functions in the pathway polyketide biosynthesis. In terms of biological role, methyltransferase; part of the gene cluster that mediates the biosynthesis of aurovertins, fungal polyketides that exhibit potent inhibition of adenosine triphosphate synthase. Tha biosynthesis starts with the HR-PKS aurA that selects propionate as the starter unit; synthesizes a hexa-ene chain through the repeated functions of the KR and DH domains in the first six iterations; selectively introduces three alpha-methyl substitutions at C4, C6, and C16 using the S-adensylmethionine-dependent cMET; and shuts off KR and DH in the last three iterations to afford a 1,3,5-triketo portion that can undergo intramolecular cyclization to yield the alpha-pyrone intermediate. AurE may act as a cyclase and enhances the rate of pyrone formation and product release of aurA. The methyltransferase aurB then methylates the C17 hydroxyl group. C17 methylation is required to initiate epoxidation by the downstream monooxygenase aurC. The monooxygenase aurC and the epoxide hydrolase aurD can iteratively transform the terminal triene portion of the methylated precursor into the dioxabicyclo[3.2.1]octane scaffold of aurovertin E. Epoxidation modifications of the precursor occur in two separate steps; bis-epoxidation of the two terminal olefins takes place first, followed by another epoxidation that occurs at C7-C8 after tetrahydrofuran formation. The O-acyltransferase aurG converts aurovertin E to aurovertin A. This chain is Methyltransferase aurB, found in Calcarisporium arbuscula (Dendryphion arbuscula).